Here is an 89-residue protein sequence, read N- to C-terminus: Small ribosomal subunit protein uS15 (89 aa).

It belongs to the universal ribosomal protein uS15 family. Part of the 30S ribosomal subunit. Forms a bridge to the 50S subunit in the 70S ribosome, contacting the 23S rRNA.

Functionally, one of the primary rRNA binding proteins, it binds directly to 16S rRNA where it helps nucleate assembly of the platform of the 30S subunit by binding and bridging several RNA helices of the 16S rRNA. Forms an intersubunit bridge (bridge B4) with the 23S rRNA of the 50S subunit in the ribosome. This chain is Small ribosomal subunit protein uS15, found in Rhizobium johnstonii (strain DSM 114642 / LMG 32736 / 3841) (Rhizobium leguminosarum bv. viciae).